The sequence spans 1131 residues: Phytochrome A (1131 aa).

The segment at 1 to 23 is disordered; the sequence is MSSSRPAHSSSSSSRTRQSSRAR. The GAF domain maps to 219-404; it reads SMEALCNTVV…VFAVHVNKEF (186 aa). Cys324 is a binding site for phytochromobilin. PAS domains follow at residues 620–690 and 750–834; these read VTSE…LQGR and VEGD…LAGE. Residues 904 to 1124 enclose the Histidine kinase domain; the sequence is YMRHAINKPL…TFILTAELAA (221 aa).

The protein belongs to the phytochrome family. As to quaternary structure, homodimer. Contains one covalently linked phytochromobilin chromophore.

Its function is as follows. Regulatory photoreceptor which exists in two forms that are reversibly interconvertible by light: the Pr form that absorbs maximally in the red region of the spectrum and the Pfr form that absorbs maximally in the far-red region. Photoconversion of Pr to Pfr induces an array of morphogenic responses, whereas reconversion of Pfr to Pr cancels the induction of those responses. Pfr controls the expression of a number of nuclear genes including those encoding the small subunit of ribulose-bisphosphate carboxylase, chlorophyll A/B binding protein, protochlorophyllide reductase, rRNA, etc. It also controls the expression of its own gene(s) in a negative feedback fashion. In Zea mays (Maize), this protein is Phytochrome A (PHYA1).